Here is a 141-residue protein sequence, read N- to C-terminus: Large ribosomal subunit protein uL16c (141 aa).

This sequence belongs to the universal ribosomal protein uL16 family. In terms of assembly, part of the 50S ribosomal subunit.

It localises to the plastid. The protein resides in the chloroplast. This Zygnema circumcarinatum (Green alga) protein is Large ribosomal subunit protein uL16c.